Here is a 1122-residue protein sequence, read N- to C-terminus: Breast carcinoma-amplified sequence 3 homolog (1122 aa).

The interval 1 to 41 is disordered; it reads MSADSPRRHPSGVVGSGIGLGSGSGTGLGSGSTGGSKSGAA. Residues 14–37 are compositionally biased toward gly residues; the sequence is VGSGIGLGSGSGTGLGSGSTGGSK. Residue serine 55 is modified to Phosphoserine. 4 stretches are compositionally biased toward low complexity: residues 357–377, 626–641, 966–987, and 1036–1051; these read GTTAGSGASSKSSSFDSASGG, GSNSQRQRQRLSSLSD, TKDNASPNPNTNTNPNAIPSSN, and LSLEGPPSQSSPPLSL. 5 disordered regions span residues 357-382, 620-644, 966-990, 1033-1054, and 1071-1122; these read GTTAGSGASSKSSSFDSASGGPDAKQ, GVGVGVGSNSQRQRQRLSSLSDDSG, TKDNASPNPNTNTNPNAIPSSNKVQ, NSRLSLEGPPSQSSPPLSLTNG, and GVAQ…RRNL. Position 638 is a phosphoserine (serine 638). The span at 1087-1112 shows a compositional bias: acidic residues; it reads VDDDDEEEEEEEEELDEEAEPDDDER. Residues 1113-1122 show a composition bias toward basic and acidic residues; that stretch reads EDRPLGRRNL.

It belongs to the BCAS3 family. Expressed in all postembryonic pericardial cells, but not in cardioblasts. Also expressed in Garland cells in third instar larvae (at protein level).

It localises to the cytoplasm. In terms of biological role, regulates macropinocytosis in pericardial cells. This chain is Breast carcinoma-amplified sequence 3 homolog (rudhira), found in Drosophila melanogaster (Fruit fly).